The chain runs to 195 residues: Putative lysine exporter (195 aa).

The next 6 helical transmembrane spans lie at 4-24 (LLSA…WLHF), 30-50 (LYVL…NGIS), 61-81 (LMMG…SAFF), 86-106 (ITQG…SVVL), 117-137 (IAFF…PLFM), and 170-190 (PIAI…LVFF).

This sequence belongs to the LysO family.

The protein resides in the cell inner membrane. Mediates export of lysine. The chain is Putative lysine exporter from Haemophilus influenzae (strain ATCC 51907 / DSM 11121 / KW20 / Rd).